The chain runs to 229 residues: Cytidylate kinase (229 aa).

12–20 (GPSGVGKST) lines the ATP pocket.

It belongs to the cytidylate kinase family. Type 1 subfamily.

Its subcellular location is the cytoplasm. It catalyses the reaction CMP + ATP = CDP + ADP. It carries out the reaction dCMP + ATP = dCDP + ADP. This chain is Cytidylate kinase, found in Mesomycoplasma hyopneumoniae (strain 232) (Mycoplasma hyopneumoniae).